Reading from the N-terminus, the 159-residue chain is Endoribonuclease YbeY (159 aa).

Zn(2+)-binding residues include His-114, His-118, and His-124.

The protein belongs to the endoribonuclease YbeY family. It depends on Zn(2+) as a cofactor.

It localises to the cytoplasm. Its function is as follows. Single strand-specific metallo-endoribonuclease involved in late-stage 70S ribosome quality control and in maturation of the 3' terminus of the 16S rRNA. The chain is Endoribonuclease YbeY from Pectobacterium carotovorum subsp. carotovorum (strain PC1).